The following is a 23-amino-acid chain: Gastrin-releasing peptide (23 aa).

Met-23 is subject to Methionine amide.

The protein belongs to the bombesin/neuromedin-B/ranatensin family.

The protein localises to the secreted. Its subcellular location is the cytoplasmic vesicle. It localises to the secretory vesicle lumen. In terms of biological role, stimulates the release of gastrin and other gastrointestinal hormones. This Oncorhynchus mykiss (Rainbow trout) protein is Gastrin-releasing peptide (grp).